The sequence spans 290 residues: Protease HtpX homolog (290 aa).

2 helical membrane passes run 5–27 (MWLRTGVLMAILTGLLMGIGYLF) and 32–51 (VAFIMFLFSMFFNFITYWYS). Position 133 (His133) interacts with Zn(2+). Glu134 is a catalytic residue. His137 is a Zn(2+) binding site. 2 consecutive transmembrane segments (helical) span residues 143–163 (ILIGTVAAAMAGAIMQLAYWA) and 182–202 (IIGAILVAILAPIAAMLIQAA). Glu208 is a binding site for Zn(2+).

Belongs to the peptidase M48B family. Zn(2+) is required as a cofactor.

The protein localises to the cell membrane. In Thermococcus kodakarensis (strain ATCC BAA-918 / JCM 12380 / KOD1) (Pyrococcus kodakaraensis (strain KOD1)), this protein is Protease HtpX homolog.